Reading from the N-terminus, the 211-residue chain is uncharacterized protein (211 aa).

This sequence belongs to the nucleoside deoxyribosyltransferase family.

It is found in the cytoplasm. It localises to the nucleus. This is an uncharacterized protein from Schizosaccharomyces pombe (strain 972 / ATCC 24843) (Fission yeast).